The following is a 495-amino-acid chain: Catalase (495 aa).

The interval 1–25 (MSNNKKLTSLFGAPVSDRENSMTAG) is disordered. Active-site residues include H55 and N128. Y338 serves as a coordination point for heme.

Belongs to the catalase family. Homodimer. The cofactor is heme.

The catalysed reaction is 2 H2O2 = O2 + 2 H2O. Decomposes hydrogen peroxide into water and oxygen; serves to protect cells from the toxic effects of hydrogen peroxide. The protein is Catalase (katA) of Staphylococcus saprophyticus subsp. saprophyticus (strain ATCC 15305 / DSM 20229 / NCIMB 8711 / NCTC 7292 / S-41).